A 482-amino-acid polypeptide reads, in one-letter code: tRNA sulfurtransferase (482 aa).

Residues 61 to 165 (LAIRDALTRI…DDRLLLIKGR (105 aa)) enclose the THUMP domain. Residues 183–184 (LI), K265, G287, and Q296 contribute to the ATP site. An intrachain disulfide couples C344 to C456. Positions 404–482 (FGPNDVILDI…GFNNVKVYRP (79 aa)) constitute a Rhodanese domain. C456 serves as the catalytic Cysteine persulfide intermediate.

The protein belongs to the ThiI family.

The protein resides in the cytoplasm. It catalyses the reaction [ThiI sulfur-carrier protein]-S-sulfanyl-L-cysteine + a uridine in tRNA + 2 reduced [2Fe-2S]-[ferredoxin] + ATP + H(+) = [ThiI sulfur-carrier protein]-L-cysteine + a 4-thiouridine in tRNA + 2 oxidized [2Fe-2S]-[ferredoxin] + AMP + diphosphate. The catalysed reaction is [ThiS sulfur-carrier protein]-C-terminal Gly-Gly-AMP + S-sulfanyl-L-cysteinyl-[cysteine desulfurase] + AH2 = [ThiS sulfur-carrier protein]-C-terminal-Gly-aminoethanethioate + L-cysteinyl-[cysteine desulfurase] + A + AMP + 2 H(+). Its pathway is cofactor biosynthesis; thiamine diphosphate biosynthesis. Its function is as follows. Catalyzes the ATP-dependent transfer of a sulfur to tRNA to produce 4-thiouridine in position 8 of tRNAs, which functions as a near-UV photosensor. Also catalyzes the transfer of sulfur to the sulfur carrier protein ThiS, forming ThiS-thiocarboxylate. This is a step in the synthesis of thiazole, in the thiamine biosynthesis pathway. The sulfur is donated as persulfide by IscS. This Shigella sonnei (strain Ss046) protein is tRNA sulfurtransferase.